Here is a 2415-residue protein sequence, read N- to C-terminus: MENFTPKEVKILETVEDIQERREQVLSRYNDFKIETRQKREKLEDSRRFQYFKRDADELESWIHEKLQAASEESYRDPTNLQAKIQKHQAFEAEVSAHSNAIVSLDNTGQEMINQQHFASESIQVRLDELHKLWELLLSRLAEKGLKLQQALVLVQFLRQCEEVMFWIKDKETFVTADEFGQDLEHVEVLQRKFDEFQKDMASQEYRVTEVNQLADKLVQDGHPERDTITKRKEELNEAWQRLKQLAIVRQEKLFGAHEIQRFNRDADETVAWIAEKDVVLSSDDYGRDLASVQALQRKHEGVERDLAALEDKVSTLGAEAQRLCSIHADHSDQIRDKQAEIANYWQSLTTKARERKQKLDESYYLHRFLADFRDLVSWINGMKAIISADELAKDVAGAEALLERHQEHKGEIDAREDSFKLTTESGQKLLEREHYAAAEIQEKLAALENDKSSLLSLWEDRRILYEQCMDLQLFYRDTEQADTWMAKQEAFLANEDLGDSLDSVEALIKKHEDFEKSLAAQEEKIKALDIFATKLIDGQHYAADDVAQRRQMLLARRAALQEKSSKRRQLLEDSNRYQQFERDCDETKGWISEKLKFATDDSYLDPTNLNGKMQKHQNFEHELNANKSRIEDITNVGTELIEKQHYAADQINTRMQEIVVLWETLVQASDKKGTKLNEACQQQQFNRTIEDIELWLSEIEGQLLSEDHGKDLTSVQNLQKKHALLEADVMAHQDRIESIKVAANKFIESGHFDADNIRNKEGNLSARYAALAAPMGERKQHLLDSLQVQQLFRDLEDEAAWIREKEPIAASTNRGRDLIGVQNLIKKHQAVLAEINNHEARLLNVISSGENMLKDQPFASDDIRQRLEALQEQWNTLKEKSSQRKQDLDDSLQAHQYFADANEAESWMREKEPIATGSDYGKDEDSSEALLKKHEALVSDLEAFGNTIQALQEQAKNCRQQETPVVDITGKECVVALYDYTEKSPREVSMKKGDVLTLLNSNNKDWWKVEVNDRQGFVPAAYIKKIDAGLSASQQNLVDNHSIAKRQNQINSQYDNLLALARERQNKLNETVKAYVLVREAADLAQWIRDKENHAQIADVVGEDLEEVEVLQKKFDDFNDDLKANEVRLANMNEIAVQLTSLGQTEAALKIQTQMQDLNEKWNNLQTLTAEKASQLGSAHEVQRFHRDIDETKDWIAEKANALNNDDLGKDLRSVQTLQRKHEGVERDLAALRDKIRQLDETANRLMQSHPDTAEQTYAKQKEINEMWDQIITKSTARKEKLLDSYDLQRFLSDYRDLLAWINSMMSLVTSDELANDVTGAEALIERHQEHRTEIDARAGTFGAFEQFGNELLQANHYASPEIKEKIEDLAKAREDLEKAWTERRLQLEQNLDLQLYMRDCELAESWMSAREAFLNADDDANAGGNVEALIKKHEDFDKAINGHEQKIAALQTVADQLIAQNHYASNLVDEKRKQVLERWRHLKEGLIEKRSRLGDEQTLQQFSRDADEIENWIAEKLQLATEESYKDPANIQSKHQKHQAFEAELAANADRIQSVLAMGGNLIDKKQCSGSEDAVQKRLTQIADQWEYLTHKTTEKSLKLKEANKQRTYIAAVKDLDFWLGEVESLLTTEDSGKDLASVQNLMKKHQLVEADIVAHEDRIKDMNNQADSLVESGQFDTAGIQEKRQSINERYERICNLAAHRQARLNEALTLHQFFRDIADEESWIKEKKLLVGSDDYGRDLTGVQNLKKKHKRLEAELGSHEPAIQAVQEAGEKLMDVSNLGVPEIEQRLKALNQAWAELKNLAATRGQKLDESLTYQQFLAQVEEEEAWITEKQQLLSVEDYGDSMAAVQGLLKKHDAFETDFTAHKDRCSLICDQGSELVEAKNHHGESIAQRCQQLRLKLDNLSALAARRKGALLDNSAYLQFMWKADVVESWIDDKENYVRSDEFGRDLSTVQTLLTKQETFDAGLNAFEQEGIHNITALKDQLINASHAQSPAILKRHGDVIARWQKLRDASNTRKDRLLAMQEQFRQIEELYLTFAKKASAFNSWFENAEEDLTDPVRCNSIEEIRALRDAHAQFQASLSSAEADFKALAALDQKIKSFNVGPNPYTWFTMEALEETWRNLQKIIEERDGELAKEAKRQEENDKLRKEFAKHANLFHQWLTETRTSMMEGSGSLEQQLEALRVKATEVRARRVDLKKIEELGALLEEHLILDNRYTEHSTVGLAQQWDQLDQLSMRMQHNLEQQIQARNHSGVSEDSLKEFSMMFKHFDKDKSGKLNHQEFKSCLRALGYDLPMVEEGQPDPEFEAILDVVDPNRDGYVSLQEYIAFMISKETENVQSYEEIENAFRAITAADRPYVTKEELYCNLTKDMADYCVQRMKPFSEPRSGQPIKDALDYIDFTRTLFQN.

Spectrin repeat units follow at residues 48–150 (RFQY…KLQQ), 154–254 (LVQF…QEKL), 258–362 (HEIQ…KLDE), 366–464 (LHRF…DRRI), 471–574 (DLQL…LLED), 577–679 (RYQQ…KLNE), 683–784 (QQQF…QHLL), 788–890 (QVQQ…QDLD), and 894–963 (QAHQ…RQQE). The SH3 domain occupies 970 to 1029 (TGKECVVALYDYTEKSPREVSMKKGDVLTLLNSNNKDWWKVEVNDRQGFVPAAYIKKIDA). S1032 and S1034 each carry phosphoserine. 11 Spectrin repeats span residues 1079 to 1177 (VREA…ASQL), 1181 to 1284 (HEVQ…EKLL), 1287 to 1391 (YDLQ…QLEQ), 1394 to 1496 (DLQL…SRLG), 1500 to 1604 (TLQQ…KLKE), 1608 to 1710 (QRTY…RLNE), 1714 to 1816 (LHQF…KLDE), 1820 to 1921 (YQQF…GALL), 1926 to 2028 (YLQF…DRLL), 2040 to 2141 (LYLT…DGEL), and 2154 to 2252 (LRKE…NLEQ). EF-hand domains are found at residues 2265-2300 (DSLKEFSMMFKHFDKDKSGKLNHQEFKSCLRALGYD) and 2308-2343 (QPDPEFEAILDVVDPNRDGYVSLQEYIAFMISKETE). Residues D2278, D2280, S2282, K2284, E2289, D2321, N2323, D2325, Y2327, and E2332 each coordinate Ca(2+).

The protein belongs to the spectrin family. As to quaternary structure, native spectrin molecule is a tetramer composed of two antiparallel heterodimers joined head to head so that each end of the native molecule includes the C-terminus of the alpha subunit and the N-terminus of the beta subunit. Interacts with calmodulin in a calcium-dependent manner, interacts with F-actin and also interacts with Lva. Interacts with Ten-m. In terms of tissue distribution, a substantial pool of maternal protein in the egg undergoes dynamic changes in distribution early in embryogenesis. In gastrulated embryo, the highest level of protein is found in the respiratory tract cells and the lowest in parts of the forming gut.

Its subcellular location is the cytoplasm. It is found in the cytoskeleton. The protein resides in the golgi apparatus. The protein localises to the cell projection. It localises to the cilium. Its subcellular location is the flagellum. In terms of biological role, spectrin is the major constituent of the cytoskeletal network underlying the erythrocyte plasma membrane. It associates with band 4.1 and actin to form the cytoskeletal superstructure of the erythrocyte plasma membrane. Essential for larval survival and development. Stabilizes cell to cell interactions that are critical for the maintenance of cell shape and subcellular organization within embryonic tissues. Lva and spectrin may form a Golgi-based scaffold that mediates interaction of Golgi bodies with microtubules and facilitates Golgi-derived membrane secretion required for the formation of furrows during cellularization. The protein is Spectrin alpha chain (alpha-Spec) of Drosophila melanogaster (Fruit fly).